Consider the following 607-residue polypeptide: Zinc finger CCCH domain-containing protein 66 (607 aa).

ANK repeat units follow at residues 57–87 (EERT…DVNR) and 92–124 (DGAT…NPDS). The segment covering 161–178 (LNEVNGQEESEPEVEVEV) has biased composition (acidic residues). The segment at 161–193 (LNEVNGQEESEPEVEVEVEVSPPRGSERKEYPV) is disordered. C3H1-type zinc fingers lie at residues 254–276 (PCPE…HGIF) and 284–308 (QYRT…HKPE). The segment at 342-363 (ISPLPIGATTTPPLSPNGVSSP) is disordered. Residues 349–361 (ATTTPPLSPNGVS) show a composition bias toward polar residues.

In Arabidopsis thaliana (Mouse-ear cress), this protein is Zinc finger CCCH domain-containing protein 66.